A 385-amino-acid chain; its full sequence is Chaperone protein DnaJ 2 (385 aa).

The region spanning 10–75 is the J domain; sequence DYYKELGVSS…AKRKEYDETR (66 aa). The CR-type zinc finger occupies 155–233; that stretch reads GVTVPLRMTS…CHGSGIQNRT (79 aa). The Zn(2+) site is built by cysteine 168, cysteine 171, cysteine 185, cysteine 188, cysteine 207, cysteine 210, cysteine 221, and cysteine 224. CXXCXGXG motif repeat units lie at residues 168 to 175, 185 to 192, 207 to 214, and 221 to 228; these read CTTCHGSG, CPICNGTG, CDGCRGTG, and CVDCHGSG.

It belongs to the DnaJ family. In terms of assembly, homodimer. Zn(2+) is required as a cofactor.

The protein localises to the cytoplasm. Its function is as follows. Participates actively in the response to hyperosmotic and heat shock by preventing the aggregation of stress-denatured proteins and by disaggregating proteins, also in an autonomous, DnaK-independent fashion. Unfolded proteins bind initially to DnaJ; upon interaction with the DnaJ-bound protein, DnaK hydrolyzes its bound ATP, resulting in the formation of a stable complex. GrpE releases ADP from DnaK; ATP binding to DnaK triggers the release of the substrate protein, thus completing the reaction cycle. Several rounds of ATP-dependent interactions between DnaJ, DnaK and GrpE are required for fully efficient folding. Also involved, together with DnaK and GrpE, in the DNA replication of plasmids through activation of initiation proteins. In Nocardia farcinica (strain IFM 10152), this protein is Chaperone protein DnaJ 2.